We begin with the raw amino-acid sequence, 152 residues long: Transcriptional regulator MraZ (152 aa).

SpoVT-AbrB domains are found at residues 5-52 and 81-124; these read ASAV…PLNQ and ATEC…SESE.

The protein belongs to the MraZ family. As to quaternary structure, forms oligomers.

The protein resides in the cytoplasm. It localises to the nucleoid. The chain is Transcriptional regulator MraZ from Histophilus somni (strain 129Pt) (Haemophilus somnus).